Here is a 295-residue protein sequence, read N- to C-terminus: Malonyl-[acyl-carrier protein] O-methyltransferase (295 aa).

This sequence belongs to the methyltransferase superfamily.

It catalyses the reaction malonyl-[ACP] + S-adenosyl-L-methionine = malonyl-[ACP] methyl ester + S-adenosyl-L-homocysteine. Its pathway is cofactor biosynthesis; biotin biosynthesis. In terms of biological role, converts the free carboxyl group of a malonyl-thioester to its methyl ester by transfer of a methyl group from S-adenosyl-L-methionine (SAM). It allows to synthesize pimeloyl-ACP via the fatty acid synthetic pathway. This chain is Malonyl-[acyl-carrier protein] O-methyltransferase, found in Xylella fastidiosa (strain M23).